The sequence spans 321 residues: Beta-ketoacyl-[acyl-carrier-protein] synthase III (321 aa).

Active-site residues include Cys-114 and His-248. An ACP-binding region spans residues Gln-249–Arg-253. Asn-278 is an active-site residue.

This sequence belongs to the thiolase-like superfamily. FabH family. As to quaternary structure, homodimer.

It localises to the cytoplasm. It catalyses the reaction malonyl-[ACP] + acetyl-CoA + H(+) = 3-oxobutanoyl-[ACP] + CO2 + CoA. It participates in lipid metabolism; fatty acid biosynthesis. Catalyzes the condensation reaction of fatty acid synthesis by the addition to an acyl acceptor of two carbons from malonyl-ACP. Catalyzes the first condensation reaction which initiates fatty acid synthesis and may therefore play a role in governing the total rate of fatty acid production. Possesses both acetoacetyl-ACP synthase and acetyl transacylase activities. Its substrate specificity determines the biosynthesis of branched-chain and/or straight-chain of fatty acids. The sequence is that of Beta-ketoacyl-[acyl-carrier-protein] synthase III from Methylococcus capsulatus (strain ATCC 33009 / NCIMB 11132 / Bath).